We begin with the raw amino-acid sequence, 633 residues long: Heterogeneous nuclear ribonucleoprotein R (633 aa).

The disordered stretch occupies residues 1-24; that stretch reads MANQVNGNAVQLKEEEEPMDTSSV. Ala2 carries the N-acetylalanine modification. Residues Lys13 and Lys171 each participate in a glycyl lysine isopeptide (Lys-Gly) (interchain with G-Cter in SUMO2) cross-link. 3 consecutive RRM domains span residues 165 to 244, 246 to 328, and 341 to 411; these read TEVF…ISVA, NRLF…WADP, and KVLF…LAKP. Lys359 is covalently cross-linked (Glycyl lysine isopeptide (Lys-Gly) (interchain with G-Cter in SUMO2)). The residue at position 366 (Lys366) is an N6-acetyllysine. The short motif at 412 to 418 is the Nuclear localization signal element; it reads PDKKRKE. The tract at residues 412–456 is disordered; that stretch reads PDKKRKERQAARQASRSTAYEDYYYHPPPRMPPPIRGRGRGGGRG. Positions 437 to 446 are enriched in pro residues; sequence HPPPRMPPPI. The RNA-binding RGG-box stretch occupies residues 447–567; that stretch reads RGRGRGGGRG…SRGSRGNRGG (121 aa). The stretch at 462–471 is one 1; approximate repeat; that stretch reads PDYYGYEDYY. The interval 462–497 is 3 X 11 AA approximate repeats of D-D-Y-Y-G-Y-D-Y-H-D-Y; that stretch reads PDYYGYEDYYDDYYGYDYHDYRGGYEDPYYGYDDGY. Residues 472-482 form repeat 2; it reads DDYYGYDYHDY. The stretch at 488–497 is one 3; approximate repeat; sequence DPYYGYDDGY. Residues 501-510 are compositionally biased toward gly residues; that stretch reads GRGGGRGGRG. The tract at residues 501–633 is disordered; sequence GRGGGRGGRG…YQDTYGQQWK (133 aa). Pro residues predominate over residues 511–524; it reads APPPPRGRGAPPPR. Residues 525-541 are compositionally biased toward low complexity; that stretch reads GRAGYSQRGAPLGPPRG. Residues 558-570 are compositionally biased toward gly residues; the sequence is SRGSRGNRGGNVG. Polar residues predominate over residues 588–604; it reads TNNQQNWGSQPIAQQPL. The span at 605 to 621 shows a compositional bias: low complexity; sequence QQGGDYSGNYGYNNDNQ. Residues 622 to 633 are compositionally biased toward polar residues; that stretch reads EFYQDTYGQQWK.

In terms of assembly, identified in the spliceosome C complex. Identified in a IGF2BP1-dependent mRNP granule complex containing untranslated mRNAs. Interacts with GTPBP1.

Its subcellular location is the nucleus. It localises to the microsome. The protein localises to the nucleoplasm. It is found in the cytoplasm. Component of ribonucleosomes, which are complexes of at least 20 other different heterogeneous nuclear ribonucleoproteins (hnRNP). hnRNP play an important role in processing of precursor mRNA in the nucleus. In Homo sapiens (Human), this protein is Heterogeneous nuclear ribonucleoprotein R (HNRNPR).